The sequence spans 224 residues: Claudin-19 (224 aa).

At 1–7 (MANSGLQ) the chain is on the cytoplasmic side. A helical membrane pass occupies residues 8-28 (LLGYFLALGGWVGIIASTALP). Residues 29–81 (QWKQSSYAGDAIITAVGLYEGLWMSCASQSTGQVQCKLYDSLLALDGHIQSAR) lie on the Extracellular side of the membrane. C54 and C64 are joined by a disulfide. Residues 82–102 (ALMVVAVLLGFVAMVLSVVGM) form a helical membrane-spanning segment. Residues 103–117 (KCTRVGDSNPTAKGR) are Cytoplasmic-facing. The chain crosses the membrane as a helical span at residues 118 to 138 (VAISGGALFLLAGLCTLTAVS). The Extracellular segment spans residues 139–160 (WYATLVTQEFFNPSTPVNARYE). The helical transmembrane segment at 161 to 181 (FGPALFVGWASAGLAILGGSF) threads the bilayer. Residues 182–224 (LCCTCPEPERANSIPQPYRSGPSTAAREPVVKLSTSVKGPLGV) are Cytoplasmic-facing.

It belongs to the claudin family. In terms of assembly, can form homo- and heteropolymeric tight junction strands. Interacts with other claudins including CLDN3, CLDN10, CLDN16 and CLDN18 with highest affinity for CLDN16. Interacts (via PDZ-binding motif TRV) with TJP1 (via PDZ domain).

The protein resides in the cell junction. It localises to the tight junction. Its subcellular location is the cell membrane. It catalyses the reaction Mg(2+)(in) = Mg(2+)(out). It carries out the reaction Ca(2+)(in) = Ca(2+)(out). The enzyme catalyses Na(+)(in) = Na(+)(out). The catalysed reaction is K(+)(in) = K(+)(out). It catalyses the reaction Rb(+)(in) = Rb(+)(out). It carries out the reaction Cs(+)(in) = Cs(+)(out). The enzyme catalyses Li(+)(in) = Li(+)(out). Functionally, forms paracellular channels: coassembles with CLDN16 into tight junction strands with cation-selective channels through the strands, conveying epithelial permeability in a process known as paracellular tight junction permeability. Involved in the maintenance of ion gradients along the nephron. In the thick ascending limb (TAL) of Henle's loop, facilitates sodium paracellular permeability from the interstitial compartment to the lumen, contributing to the lumen-positive transepithelial potential that drives paracellular magnesium and calcium reabsorption. Forms paracellular barriers on its own. In the peripheral nervous system, represents a major constituent of the tight junctions in Schwann cells and contributes to electrical sealing. During retinal neurogenesis, may regulate the barrier properties of tight junctions in retinal pigment epithelium, required for proper retinal tissue differentiation and vision. The protein is Claudin-19 of Rattus norvegicus (Rat).